A 154-amino-acid chain; its full sequence is Cytochrome c-type biogenesis protein CcmE (154 aa).

Over 1 to 8 (MTPQRKRR) the chain is Cytoplasmic. The helical; Signal-anchor for type II membrane protein transmembrane segment at 9 to 29 (LVMLAALAGGVGVAVALALAA) threads the bilayer. Over 30 to 154 (LQQNINLFYS…GGTPAAEPQP (125 aa)) the chain is Periplasmic. Heme contacts are provided by H124 and Y128. A disordered region spans residues 130–154 (PPEAAHALKQGAATSGGTPAAEPQP).

Belongs to the CcmE/CycJ family.

The protein localises to the cell inner membrane. In terms of biological role, heme chaperone required for the biogenesis of c-type cytochromes. Transiently binds heme delivered by CcmC and transfers the heme to apo-cytochromes in a process facilitated by CcmF and CcmH. This Bordetella petrii (strain ATCC BAA-461 / DSM 12804 / CCUG 43448) protein is Cytochrome c-type biogenesis protein CcmE.